The following is a 103-amino-acid chain: Large ribosomal subunit protein bL21 (103 aa).

This sequence belongs to the bacterial ribosomal protein bL21 family. In terms of assembly, part of the 50S ribosomal subunit. Contacts protein L20.

This protein binds to 23S rRNA in the presence of protein L20. This is Large ribosomal subunit protein bL21 from Yersinia pseudotuberculosis serotype O:1b (strain IP 31758).